Reading from the N-terminus, the 232-residue chain is Cysteine proteinase inhibitor 7 (232 aa).

The first 29 residues, 1-29 (MDMRRASMCMMLICVSLVLLSGFGQFVIC), serve as a signal peptide directing secretion. Cystatin domains follow at residues 46–135 (GGFS…KNII) and 152–214 (FDWR…ERGN). The Secondary area of contact motif lies at 91–95 (QVVAG). Ser-181 carries the post-translational modification Phosphoserine.

It belongs to the cystatin family. Phytocystatin subfamily.

It is found in the secreted. In terms of biological role, specific inhibitor of cysteine proteinases. Probably involved in the regulation of endogenous processes and in defense against pests and pathogens. The chain is Cysteine proteinase inhibitor 7 (CYS7) from Arabidopsis thaliana (Mouse-ear cress).